Consider the following 334-residue polypeptide: Protein-methionine-sulfoxide reductase catalytic subunit MsrP (334 aa).

The segment at residues 1–44 is a signal peptide (tat-type signal); the sequence is MKKIRKLTEADVTAESAFFMQRRQVLKALGISAAALSLPNAAHA. Residues Asn88, 91-92, Cys146, Thr181, Asn233, Arg238, and 249-251 each bind Mo-molybdopterin; these read YE and GIK.

The protein belongs to the MsrP family. As to quaternary structure, heterodimer of a catalytic subunit (MsrP) and a heme-binding subunit (MsrQ). Mo-molybdopterin is required as a cofactor. In terms of processing, predicted to be exported by the Tat system. The position of the signal peptide cleavage has not been experimentally proven.

It localises to the periplasm. It catalyses the reaction L-methionyl-[protein] + a quinone + H2O = L-methionyl-(S)-S-oxide-[protein] + a quinol. The enzyme catalyses L-methionyl-[protein] + a quinone + H2O = L-methionyl-(R)-S-oxide-[protein] + a quinol. Its function is as follows. Part of the MsrPQ system that repairs oxidized periplasmic proteins containing methionine sulfoxide residues (Met-O), using respiratory chain electrons. Thus protects these proteins from oxidative-stress damage caused by reactive species of oxygen and chlorine generated by the host defense mechanisms. MsrPQ is essential for the maintenance of envelope integrity under bleach stress, rescuing a wide series of structurally unrelated periplasmic proteins from methionine oxidation, including the primary periplasmic chaperone SurA and the lipoprotein Pal. The catalytic subunit MsrP is non-stereospecific, being able to reduce both (R-) and (S-) diastereoisomers of methionine sulfoxide. The polypeptide is Protein-methionine-sulfoxide reductase catalytic subunit MsrP (Escherichia fergusonii (strain ATCC 35469 / DSM 13698 / CCUG 18766 / IAM 14443 / JCM 21226 / LMG 7866 / NBRC 102419 / NCTC 12128 / CDC 0568-73)).